Here is a 181-residue protein sequence, read N- to C-terminus: GMP synthase [glutamine-hydrolyzing] subunit A (181 aa).

The region spanning 2-181 (KILVVNNYGQ…FDNFLEICRR (180 aa)) is the Glutamine amidotransferase type-1 domain. Cysteine 72 serves as the catalytic Nucleophile. Residues histidine 159 and glutamate 161 contribute to the active site.

As to quaternary structure, heterodimer composed of a glutamine amidotransferase subunit (A) and a GMP-binding subunit (B).

The catalysed reaction is XMP + L-glutamine + ATP + H2O = GMP + L-glutamate + AMP + diphosphate + 2 H(+). It participates in purine metabolism; GMP biosynthesis; GMP from XMP (L-Gln route): step 1/1. Functionally, catalyzes the synthesis of GMP from XMP. This chain is GMP synthase [glutamine-hydrolyzing] subunit A, found in Methanothrix thermoacetophila (strain DSM 6194 / JCM 14653 / NBRC 101360 / PT) (Methanosaeta thermophila).